The primary structure comprises 438 residues: Serine/threonine-protein kinase VIK (438 aa).

The disordered stretch occupies residues 1-31; that stretch reads MSSDSPAAGDGGEQAAAGTSVPSPSYDKQKE. ANK repeat units lie at residues 36–65, 70–99, and 103–133; these read SRTSLILWHAHQNDAAAVRKLLEEDPTLVH, DKRTPLHVASLHGWIDVVKCLLEFGADVNA, and WKNTPLADAEGARKQKMIELLKSHGGLSYGQ. The 266-residue stretch at 162 to 427 folds into the Protein kinase domain; it reads FSNAAMIGKG…KRLEKIKETL (266 aa). ATP-binding positions include 168 to 176 and lysine 189; that span reads IGKGSFGEI. The active-site Proton acceptor is the aspartate 285.

The protein belongs to the protein kinase superfamily. Ser/Thr protein kinase family. Interacts with BRL2. Binds to MSSP1/TMT1 at the tonoplast. Phosphorylated. Restricted to mature vascular cells. Mostly expressed in mature leaves and seeds, and, to a lower level, in seedlings, young leaves, flowers and siliques.

It is found in the vacuole. The enzyme catalyses L-seryl-[protein] + ATP = O-phospho-L-seryl-[protein] + ADP + H(+). The catalysed reaction is L-threonyl-[protein] + ATP = O-phospho-L-threonyl-[protein] + ADP + H(+). Serine/threonine protein kinase which may function as an adapter protein for BRL2. Required during vascular development for the establishment of vein pattern in foliar organs. Mediates MSSP1/TMT1 phosphorylation and activation to enhance its carrier activity and consequently vacuolar sugar accumulation, particularly in response to cold. This chain is Serine/threonine-protein kinase VIK, found in Arabidopsis thaliana (Mouse-ear cress).